The primary structure comprises 299 residues: MQLLRAGLTLALGAGLGAAAESWWRQRADARATPGLLSRLPVLPVAAAAGLPAVPGAPAGGGPGELAKYGLPGVAQLKSRASYVLCYDPRTRGALWVVEQLRPEGLRGDGNRSSCDFHEDDSVHAYHRATNADYRGSGFDRGHLAAAANHRWSQKAMDDTFYLSNVAPQVPHLNQNAWNNLEKYSRSLTRTYQNVYVCTGPLFLPRTEADGKSYVKYQVIGKNHVAVPTHFFKVLILEAAGGQIELRSYVMPNAPVDEAIPLEHFLVPIESIERASGLLFVPNILARAGSLKAITAGSK.

A mitochondrion-targeting transit peptide spans methionine 1–alanine 48. Phosphothreonine is present on threonine 130. The Proton acceptor role is filled by histidine 143. Asparagine 174 serves as a coordination point for Mg(2+). An essential for deoxyribonuclease activity region spans residues alanine 288 to serine 298. Serine 290 carries the phosphoserine modification.

The protein belongs to the DNA/RNA non-specific endonuclease family. Homodimer; disulfide-linked. Homodimerization is essential for its activity. Interacts with YWHAG. Mg(2+) is required as a cofactor. In terms of processing, GSK3-beta-mediated dual phosphorylations at Thr-130 and Ser-290 is necessary for its interaction with YWHAG and the induction of autophagy.

It localises to the mitochondrion. In terms of biological role, endonuclease that preferentially catalyzes the cleavage of double-stranded 5-hydroxymethylcytosine (5hmC)-modified DNA. The 5hmC-modified nucleotide does not increase the binding affinity, but instead increases the efficiency of cutting and specifies the site of cleavage for the modified DNAs. Shows significantly higher affinity for four- stranded Holliday junction over duplex and single-stranded DNAs. Promotes conservative recombination when the DNA is 5hmC-modified. Promotes autophagy through the suppression of mTOR by its phosphorylation-mediated interaction with YWHAG and its endonuclease activity-mediated DNA damage response. GSK3-beta mediated phosphorylation of ENDOG enhances its interaction with YWHAG, leading to the release of TSC2 and PIK3C3 from YWHAG resulting in mTOR pathway suppression and autophagy initiation. Promotes cleavage of mtDNA in response to oxidative and nitrosative stress, in turn inducing compensatory mtDNA replication. The chain is Endonuclease G, mitochondrial (ENDOG) from Bos taurus (Bovine).